A 357-amino-acid chain; its full sequence is Multiple sugar-binding periplasmic protein SbpA (357 aa).

A signal peptide spans 1-20 (MSSSFTTTLAGMAVGMLVLA).

The protein belongs to the bacterial solute-binding protein 2 family.

The protein localises to the periplasm. In terms of biological role, mediates chemotaxis towards D-galactose, L-arabinose and D-fucose but not towards D-fructose. Probably part of a binding-protein high affinity uptake system. This is Multiple sugar-binding periplasmic protein SbpA (sbpA) from Azospirillum brasilense.